The sequence spans 431 residues: uncharacterized protein (431 aa).

4Fe-4S ferredoxin-type domains are found at residues 336–367 (VRPV…NGLD) and 362–391 (IDNG…MDTG).

This is an uncharacterized protein from Methanothermobacter thermautotrophicus (strain ATCC 29096 / DSM 1053 / JCM 10044 / NBRC 100330 / Delta H) (Methanobacterium thermoautotrophicum).